The chain runs to 313 residues: MPKIKSAASGRRRERQQQRGQLKSAGGLMFNTGIGQHILKNPLIVNSIIDKAALRPTDVVLEVGPGTGNMTVKLLEKAKKVIACELDPRLVAELHKRVQGTPLASKLQVMVGDVLKADLPFFDACVANLPYQISSPFVFKLLLHRPFFRCAVLMFQREFALRLVAKPGDKLYCRLSINTQLLARVDHLMKVGKNNFRPPPKVESSVVRIEPKNPPPPINFQEWDGLVRITFVRKNKTLSAAFKSSAVQQLLEKNYRIHCSVHNIIIPEDFSIADKIQQILTSTGFSDKRARSMDIDDFIRLLHGFNAEGIHFS.

Residues 1–22 (MPKIKSAASGRRRERQQQRGQL) are disordered. 6 residues coordinate S-adenosyl-L-methionine: His37, Leu39, Gly64, Glu85, Asp113, and Asn128.

The protein belongs to the class I-like SAM-binding methyltransferase superfamily. rRNA adenine N(6)-methyltransferase family. In terms of assembly, part of the small subunit (SSU) processome, composed of more than 70 proteins and the RNA chaperone small nucleolar RNA (snoRNA) U3.

It localises to the nucleus. The protein localises to the nucleoplasm. Its subcellular location is the nucleolus. It catalyses the reaction adenosine(1779)/adenosine(1780) in 18S rRNA + 4 S-adenosyl-L-methionine = N(6)-dimethyladenosine(1779)/N(6)-dimethyladenosine(1780) in 18S rRNA + 4 S-adenosyl-L-homocysteine + 4 H(+). In terms of biological role, specifically dimethylates two adjacent adenosines in the loop of a conserved hairpin near the 3'-end of 18S rRNA in the 40S particle. Involved in the pre-rRNA processing steps leading to small-subunit rRNA production independently of its RNA-modifying catalytic activity. Part of the small subunit (SSU) processome, first precursor of the small eukaryotic ribosomal subunit. During the assembly of the SSU processome in the nucleolus, many ribosome biogenesis factors, an RNA chaperone and ribosomal proteins associate with the nascent pre-rRNA and work in concert to generate RNA folding, modifications, rearrangements and cleavage as well as targeted degradation of pre-ribosomal RNA by the RNA exosome. The protein is Dimethyladenosine transferase (DIMT1) of Bos taurus (Bovine).